The sequence spans 94 residues: Large ribosomal subunit protein uL22 (94 aa).

It belongs to the universal ribosomal protein uL22 family. As to quaternary structure, part of the 50S ribosomal subunit.

Functionally, this protein binds specifically to 23S rRNA; its binding is stimulated by other ribosomal proteins, e.g. L4, L17, and L20. It is important during the early stages of 50S assembly. It makes multiple contacts with different domains of the 23S rRNA in the assembled 50S subunit and ribosome. The globular domain of the protein is located near the polypeptide exit tunnel on the outside of the subunit, while an extended beta-hairpin is found that lines the wall of the exit tunnel in the center of the 70S ribosome. In Tomato big bud phytoplasma, this protein is Large ribosomal subunit protein uL22 (rplV).